Here is a 318-residue protein sequence, read N- to C-terminus: Protein FdhE homolog (318 aa).

Belongs to the FdhE family.

The protein localises to the cytoplasm. Its function is as follows. Necessary for formate dehydrogenase activity. In Pseudomonas putida (strain ATCC 47054 / DSM 6125 / CFBP 8728 / NCIMB 11950 / KT2440), this protein is Protein FdhE homolog.